A 344-amino-acid chain; its full sequence is N-acetyl-gamma-glutamyl-phosphate reductase (344 aa).

Cys-150 is a catalytic residue.

This sequence belongs to the NAGSA dehydrogenase family. Type 1 subfamily.

It localises to the cytoplasm. It carries out the reaction N-acetyl-L-glutamate 5-semialdehyde + phosphate + NADP(+) = N-acetyl-L-glutamyl 5-phosphate + NADPH + H(+). Its pathway is amino-acid biosynthesis; L-arginine biosynthesis; N(2)-acetyl-L-ornithine from L-glutamate: step 3/4. Catalyzes the NADPH-dependent reduction of N-acetyl-5-glutamyl phosphate to yield N-acetyl-L-glutamate 5-semialdehyde. The sequence is that of N-acetyl-gamma-glutamyl-phosphate reductase from Pseudomonas savastanoi pv. phaseolicola (strain 1448A / Race 6) (Pseudomonas syringae pv. phaseolicola (strain 1448A / Race 6)).